Consider the following 467-residue polypeptide: ATP synthase subunit beta 1 (467 aa).

150-157 (GGAGVGKT) provides a ligand contact to ATP.

It belongs to the ATPase alpha/beta chains family. F-type ATPases have 2 components, CF(1) - the catalytic core - and CF(0) - the membrane proton channel. CF(1) has five subunits: alpha(3), beta(3), gamma(1), delta(1), epsilon(1). CF(0) has three main subunits: a(1), b(2) and c(9-12). The alpha and beta chains form an alternating ring which encloses part of the gamma chain. CF(1) is attached to CF(0) by a central stalk formed by the gamma and epsilon chains, while a peripheral stalk is formed by the delta and b chains.

It is found in the cell inner membrane. It catalyses the reaction ATP + H2O + 4 H(+)(in) = ADP + phosphate + 5 H(+)(out). Functionally, produces ATP from ADP in the presence of a proton gradient across the membrane. The catalytic sites are hosted primarily by the beta subunits. The chain is ATP synthase subunit beta 1 from Vibrio campbellii (strain ATCC BAA-1116).